The following is a 254-amino-acid chain: Triosephosphate isomerase (254 aa).

10-12 (NWK) lines the substrate pocket. H96 acts as the Electrophile in catalysis. E168 (proton acceptor) is an active-site residue. Residues G174, S214, and 235–236 (GG) contribute to the substrate site.

Belongs to the triosephosphate isomerase family. As to quaternary structure, homodimer.

The protein resides in the cytoplasm. It catalyses the reaction D-glyceraldehyde 3-phosphate = dihydroxyacetone phosphate. It participates in carbohydrate biosynthesis; gluconeogenesis. The protein operates within carbohydrate degradation; glycolysis; D-glyceraldehyde 3-phosphate from glycerone phosphate: step 1/1. Functionally, involved in the gluconeogenesis. Catalyzes stereospecifically the conversion of dihydroxyacetone phosphate (DHAP) to D-glyceraldehyde-3-phosphate (G3P). The protein is Triosephosphate isomerase of Rhodopirellula baltica (strain DSM 10527 / NCIMB 13988 / SH1).